Reading from the N-terminus, the 120-residue chain is NAD(P)H-quinone oxidoreductase subunit 3 (120 aa).

3 helical membrane passes run Tyr7–Ala27, Met64–Val84, and Leu89–Val109.

This sequence belongs to the complex I subunit 3 family. In terms of assembly, NDH-1 can be composed of about 15 different subunits; different subcomplexes with different compositions have been identified which probably have different functions.

The protein resides in the cellular thylakoid membrane. The enzyme catalyses a plastoquinone + NADH + (n+1) H(+)(in) = a plastoquinol + NAD(+) + n H(+)(out). It carries out the reaction a plastoquinone + NADPH + (n+1) H(+)(in) = a plastoquinol + NADP(+) + n H(+)(out). Functionally, NDH-1 shuttles electrons from an unknown electron donor, via FMN and iron-sulfur (Fe-S) centers, to quinones in the respiratory and/or the photosynthetic chain. The immediate electron acceptor for the enzyme in this species is believed to be plastoquinone. Couples the redox reaction to proton translocation, and thus conserves the redox energy in a proton gradient. Cyanobacterial NDH-1 also plays a role in inorganic carbon-concentration. This Crocosphaera subtropica (strain ATCC 51142 / BH68) (Cyanothece sp. (strain ATCC 51142)) protein is NAD(P)H-quinone oxidoreductase subunit 3.